Consider the following 236-residue polypeptide: Orotidine 5'-phosphate decarboxylase (236 aa).

Substrate contacts are provided by residues aspartate 12, lysine 34, 60–69 (DLKLHDIPHT), threonine 123, arginine 184, glutamine 193, glycine 213, and arginine 214. Lysine 62 (proton donor) is an active-site residue.

This sequence belongs to the OMP decarboxylase family. Type 1 subfamily. In terms of assembly, homodimer.

The catalysed reaction is orotidine 5'-phosphate + H(+) = UMP + CO2. Its pathway is pyrimidine metabolism; UMP biosynthesis via de novo pathway; UMP from orotate: step 2/2. Its function is as follows. Catalyzes the decarboxylation of orotidine 5'-monophosphate (OMP) to uridine 5'-monophosphate (UMP). In Gluconobacter oxydans (strain 621H) (Gluconobacter suboxydans), this protein is Orotidine 5'-phosphate decarboxylase.